The following is a 220-amino-acid chain: NADH-quinone oxidoreductase subunit I (220 aa).

4Fe-4S ferredoxin-type domains are found at residues 71–102 and 112–141; these read LQRL…IITH and DSYT…MGNR. Residues C82, C85, C88, C92, C121, C124, C127, and C131 each contribute to the [4Fe-4S] cluster site. A disordered region spans residues 189 to 220; sequence ATPLDYVQEPSKEESKKETPTSPEANKGDENV. A compositionally biased stretch (basic and acidic residues) spans 198–207; it reads PSKEESKKET.

This sequence belongs to the complex I 23 kDa subunit family. NDH-1 is composed of 14 different subunits. Subunits NuoA, H, J, K, L, M, N constitute the membrane sector of the complex. Requires [4Fe-4S] cluster as cofactor.

The protein resides in the cell inner membrane. It carries out the reaction a quinone + NADH + 5 H(+)(in) = a quinol + NAD(+) + 4 H(+)(out). Its function is as follows. NDH-1 shuttles electrons from NADH, via FMN and iron-sulfur (Fe-S) centers, to quinones in the respiratory chain. The immediate electron acceptor for the enzyme in this species is believed to be ubiquinone. Couples the redox reaction to proton translocation (for every two electrons transferred, four hydrogen ions are translocated across the cytoplasmic membrane), and thus conserves the redox energy in a proton gradient. This is NADH-quinone oxidoreductase subunit I from Helicobacter acinonychis (strain Sheeba).